We begin with the raw amino-acid sequence, 1390 residues long: Contactin (1390 aa).

Positions 1–18 (MLAKIGLLASILVLNLVG) are cleaved as a signal peptide. The tract at residues 25–67 (SENLPDPDPQSGQQPQNYQPSYNKDYSPRYNPLYTGQQSADPN) is disordered. Polar residues predominate over residues 58-67 (YTGQQSADPN). Ig-like C2-type domains follow at residues 362-463 (PYFV…AHLN), 468-561 (MEFN…LRVT), 576-656 (PKVF…IYIN), 661-745 (PQFT…TSFS), 756-843 (PSFK…ARVI), and 848-939 (IRFI…TSVS). The N-linked (GlcNAc...) asparagine glycan is linked to Asn-369. 4 disulfides stabilise this stretch: Cys-388–Cys-446, Cys-489–Cys-540, Cys-593–Cys-640, and Cys-682–Cys-734. Asn-537, Asn-604, Asn-629, Asn-691, and Asn-774 each carry an N-linked (GlcNAc...) asparagine glycan. Cystine bridges form between Cys-779/Cys-827 and Cys-870/Cys-923. Residues Asn-912, Asn-986, and Asn-991 are each glycosylated (N-linked (GlcNAc...) asparagine). 4 consecutive Fibronectin type-III domains span residues 946–1048 (APGG…TYED), 1053–1151 (APRN…SAED), 1156–1254 (APQK…TYRK), and 1259–1357 (PPSS…MGKT). N-linked (GlcNAc...) asparagine glycosylation is found at Asn-1166, Asn-1171, and Asn-1307. A lipid anchor (GPI-anchor amidated alanine) is attached at Ala-1362. The propeptide at 1363–1390 (NTRHGHNINTALILSTLLLISTFLYTSQ) is removed in mature form.

Belongs to the immunoglobulin superfamily. Contactin family. As to quaternary structure, forms a complex with Nrg and Nrx. Forms a complex composed of septa junction proteins Nrx-IV/Nrx, Tsf2/MTf, Cont and Nrg during late embryogenesis. N-glycosylated. In terms of tissue distribution, expressed in ectodermally derived epithelial cells from stage 12. All these tissues, such as epidermis, hindgut, foregut, salivary glands and trachea, which contain pleated septate junctions. Expressed by ectodermally derived epithelial cells and along peripheral nerves. Not present in midline glial cells. Expressed in epithelial cells and glial cells of peripheral nerves.

It localises to the cell membrane. The protein resides in the cell junction. Its subcellular location is the septate junction. Functionally, required for organization of septate junctions and paracellular barrier functions. Septate junctions, which are the equivalent of vertebrates tight junctions, are characterized by regular arrays of transverse structures that span the intermembrane space and form a physical barrier to diffusion. This is Contactin (Cont) from Drosophila melanogaster (Fruit fly).